A 715-amino-acid chain; its full sequence is SANT and BTB domain regulator of class switch recombination (715 aa).

The SANT domain occupies 21–59 (DMILCSLVGVPQPISWDSVARLVPGYTPKECAKRFEELK). The 109-residue stretch at 146-254 (MVIHVCDEAK…ECIRYCHKNM (109 aa)) folds into the BTB domain. A compositionally biased stretch (acidic residues) spans 552–573 (SEEEDYTTGSEVTEDEVGDEEE). Disordered regions lie at residues 552–623 (SEEE…VSLQ) and 689–715 (SAHSNTRQMNTEKIPRPKPRFGTGRPT). The segment covering 578 to 605 (QAGRKVKPKRSAKQTKKHISSPSIHKKE) has biased composition (basic residues). Composition is skewed to polar residues over residues 614–623 (DSSPFTVSLQ) and 690–699 (AHSNTRQMNT).

This sequence belongs to the KIAA1841 family. As to quaternary structure, homodimer.

Negatively regulates class switch recombination or isotype switching in splenic B-cells. The chain is SANT and BTB domain regulator of class switch recombination from Xenopus laevis (African clawed frog).